The sequence spans 87 residues: Phosphoribosyl-ATP pyrophosphatase (87 aa).

This sequence belongs to the PRA-PH family.

The protein localises to the cytoplasm. It catalyses the reaction 1-(5-phospho-beta-D-ribosyl)-ATP + H2O = 1-(5-phospho-beta-D-ribosyl)-5'-AMP + diphosphate + H(+). It participates in amino-acid biosynthesis; L-histidine biosynthesis; L-histidine from 5-phospho-alpha-D-ribose 1-diphosphate: step 2/9. In Thermobifida fusca (strain YX), this protein is Phosphoribosyl-ATP pyrophosphatase.